Here is a 150-residue protein sequence, read N- to C-terminus: Large ribosomal subunit protein bL9 (150 aa).

It belongs to the bacterial ribosomal protein bL9 family.

Binds to the 23S rRNA. This chain is Large ribosomal subunit protein bL9, found in Vibrio atlanticus (strain LGP32) (Vibrio splendidus (strain Mel32)).